The primary structure comprises 504 residues: Sodium-coupled neutral amino acid symporter 2 (504 aa).

Residues 1–22 (MKKTEMGRFNISPDEDSSSYSS) are disordered. At 1–76 (MKKTEMGRFN…HPGTTSFGMS (76 aa)) the chain is on the cytoplasmic side. A regulates protein turnover upon amino acid deprivation region spans residues 1–96 (MKKTEMGRFN…SGILGLSYAM (96 aa)). 4 positions are modified to phosphoserine: Ser-12, Ser-21, Ser-22, and Ser-55. The helical transmembrane segment at 77–96 (VFNLSNAIVGSGILGLSYAM) threads the bilayer. Residue Asn-82 participates in Na(+) binding. Topologically, residues 97–102 (ANTGIA) are extracellular. The chain crosses the membrane as a helical span at residues 103–123 (LFIILLTFVSIFSLYSVHLLL). The Cytoplasmic portion of the chain corresponds to 124-158 (KTANEGGSLLYEQLGHKAYGLAGKLAASGSITMQN). A helical membrane pass occupies residues 159-177 (IGAMSSYLFIVKYELPLVI). Topologically, residues 178–188 (KALMNIEDTNG) are extracellular. A helical membrane pass occupies residues 189–209 (LWYLNGDYLVLLVSFVLILPL). Residues 210–217 (SLLRNLGY) are Cytoplasmic-facing. The chain crosses the membrane as a helical span at residues 218 to 238 (LGYTSGLSLLCMIFFLIVVIC). The Extracellular segment spans residues 239–290 (KKFQIPCPVEVALMANETVNGTFTQVALAALASNSTAADTCRPRYFIFNSQT). An intrachain disulfide couples Cys-245 to Cys-279. N-linked (GlcNAc...) asparagine glycans are attached at residues Asn-254, Asn-258, and Asn-272. The helical transmembrane segment at 291-311 (VYAVPILTFSFVCHPAVLPIY) threads the bilayer. Topologically, residues 312–327 (EELKSRSRRRMMNVSK) are cytoplasmic. The helical transmembrane segment at 328 to 348 (ISFFAMFLMYLLAALFGYLTF) threads the bilayer. The Extracellular portion of the chain corresponds to 349 to 369 (YEHVESELLHTYSAIVGTDIL). A helical transmembrane segment spans residues 370–390 (LLVVRLAVLVAVTLTVPVVIF). Residue Thr-384 coordinates Na(+). Residues 391-411 (PIRSSVTHLLCPTKEFSWFRH) are Cytoplasmic-facing. Residues 412 to 432 (SVITVTILAFTNLLVIFVPTI) traverse the membrane as a helical segment. Residues 433 to 434 (RD) are Extracellular-facing. Residues 435 to 455 (IFGFIGASAAAMLIFILPSAF) form a helical membrane-spanning segment. The Cytoplasmic portion of the chain corresponds to 456-470 (YIKLVKKEPMRSVQK). A helical transmembrane segment spans residues 471–493 (IGALCFLLSGVVVMIGSMGLIVL). Topologically, residues 494-504 (DWVHDASAGGH) are extracellular.

This sequence belongs to the amino acid/polyamine transporter 2 family. Polyubiquitination by NEDD4L regulates the degradation and the activity of SLC38A2. Widely expressed. Expressed in skeletal muscle and adipose tissue (at protein level). Expressed by glutamatergic and GABAergic neurons together with astrocytes and other non-neuronal cells in the cerebral cortex (at protein level). Widely expressed in the central nervous systeme where, it is enriched in the spinal cord and the brainstem nuclei, especially those of the auditory system.

The protein resides in the cell membrane. It catalyses the reaction L-alanine(in) + Na(+)(in) = L-alanine(out) + Na(+)(out). The enzyme catalyses glycine(in) + Na(+)(in) = glycine(out) + Na(+)(out). It carries out the reaction L-serine(in) + Na(+)(in) = L-serine(out) + Na(+)(out). The catalysed reaction is L-proline(in) + Na(+)(in) = L-proline(out) + Na(+)(out). It catalyses the reaction L-methionine(in) + Na(+)(in) = L-methionine(out) + Na(+)(out). The enzyme catalyses L-histidine(in) + Na(+)(in) = L-histidine(out) + Na(+)(out). It carries out the reaction L-asparagine(in) + Na(+)(in) = L-asparagine(out) + Na(+)(out). The catalysed reaction is L-glutamine(in) + Na(+)(in) = L-glutamine(out) + Na(+)(out). It catalyses the reaction L-threonine(in) + Na(+)(in) = L-threonine(out) + Na(+)(out). The enzyme catalyses L-leucine(in) + Na(+)(in) = L-leucine(out) + Na(+)(out). It carries out the reaction L-phenylalanine(in) + Na(+)(in) = L-phenylalanine(out) + Na(+)(out). Its activity is regulated as follows. Inhibited by N-methyl-D-glucamine. Inhibited by choline. Allosteric regulation of sodium ions binding by pH. In terms of biological role, symporter that cotransports neutral amino acids and sodium ions from the extracellular to the intracellular side of the cell membrane. The transport is pH-sensitive, Li(+)-intolerant, electrogenic, driven by the Na(+) electrochemical gradient and cotransports of neutral amino acids and sodium ions with a stoichiometry of 1:1. May function in the transport of amino acids at the blood-brain barrier. May function in the transport of amino acids in the supply of maternal nutrients to the fetus through the placenta. Maintains a key metabolic glutamine/glutamate balance underpinning retrograde signaling by dendritic release of the neurotransmitter glutamate. Transports L-proline in differentiating osteoblasts for the efficient synthesis of proline-enriched proteins and provides proline essential for osteoblast differentiation and bone formation during bone development. This chain is Sodium-coupled neutral amino acid symporter 2, found in Rattus norvegicus (Rat).